The primary structure comprises 230 residues: Lecithin retinol acyltransferase (230 aa).

At 1-194 the chain is on the cytoplasmic side; sequence MKNPMLEVVS…VKIIIRDQRS (194 aa). The region spanning 50–177 is the LRAT domain; that stretch reads VLEVPRTHLT…CRYGTPISPQ (128 aa). Catalysis depends on residues His60 and His72. The Acyl-thioester intermediate role is filled by Cys161. A helical membrane pass occupies residues 195–215; that stretch reads VLASAVLGLASIVCTGLVSYT. Over 216–230 the chain is Lumenal; the sequence is TLPAIFIPFFLWMAG.

This sequence belongs to the H-rev107 family. As to expression, hepatic stellate cells and endothelial cells (at protein level). Found at high levels in testis and liver, followed by retinal pigment epithelium, small intestine, prostate, pancreas and colon. Low expression observed in brain. In fetal tissues, expressed in retinal pigment epithelium and liver, and barely in the brain.

It localises to the endoplasmic reticulum membrane. The protein localises to the rough endoplasmic reticulum. The protein resides in the endosome. It is found in the multivesicular body. Its subcellular location is the cytoplasm. It localises to the perinuclear region. It carries out the reaction all-trans-retinol--[retinol-binding protein] + a 1,2-diacyl-sn-glycero-3-phosphocholine = apo--[retinol-binding protein] + an all-trans-retinyl ester + a 2-acyl-sn-glycero-3-phosphocholine. The catalysed reaction is 1,2-dihexadecanoyl-sn-glycero-3-phosphocholine + all-trans-retinol = all-trans-retinyl hexadecanoate + 2-hexadecanoyl-sn-glycero-3-phosphocholine. The enzyme catalyses 1,2-diheptanoyl-sn-glycero-3-phosphocholine + all-trans-retinol--[retinol-binding protein] = all-trans-retinyl heptanoate + 2-heptanoyl-sn-glycero-3-phosphocholine + apo--[retinol-binding protein]. It catalyses the reaction 1,2-dioctanoyl-sn-glycero-3-phosphocholine + all-trans-retinol--[retinol-binding protein] = 2-octanoyl-sn-glycero-3-phosphocholine + all-trans-retinyl octanoate + apo--[retinol-binding protein]. It carries out the reaction all-trans-retinol--[retinol-binding protein] + 1,2-dihexadecanoyl-sn-glycero-3-phosphocholine = apo--[retinol-binding protein] + all-trans-retinyl hexadecanoate + 2-hexadecanoyl-sn-glycero-3-phosphocholine. The catalysed reaction is 1,2-didodecanoyl-sn-glycero-3-phosphocholine + all-trans-retinol--[retinol-binding protein] = 2-dodecanoyl-sn-glycero-3-phosphocholine + all-trans-retinyl dodecanoate + apo--[retinol-binding protein]. Its pathway is cofactor metabolism; retinol metabolism. With respect to regulation, inhibited by all-trans-retinyl alpha-bromoacetate and N-boc-L-biocytinyl-11-aminoundecane chloro-methyl ketone (BACMK). Functionally, transfers the acyl group from the sn-1 position of phosphatidylcholine to all-trans retinol, producing all-trans retinyl esters. Retinyl esters are storage forms of vitamin A. LRAT plays a critical role in vision. It provides the all-trans retinyl ester substrates for the isomerohydrolase which processes the esters into 11-cis-retinol in the retinal pigment epithelium; due to a membrane-associated alcohol dehydrogenase, 11 cis-retinol is oxidized and converted into 11-cis-retinaldehyde which is the chromophore for rhodopsin and the cone photopigments. Required for the survival of cone photoreceptors and correct rod photoreceptor cell morphology. This Homo sapiens (Human) protein is Lecithin retinol acyltransferase.